Consider the following 525-residue polypeptide: Protein kinase PINOID 2 (525 aa).

The disordered stretch occupies residues M1–R27. The 379-residue stretch at F87–F465 folds into the Protein kinase domain. ATP contacts are provided by residues L93–V101 and K118. Residue D214 is the Proton acceptor of the active site. One can recognise an AGC-kinase C-terminal domain in the interval E466–F525.

The protein belongs to the protein kinase superfamily. Ser/Thr protein kinase family.

It carries out the reaction L-seryl-[protein] + ATP = O-phospho-L-seryl-[protein] + ADP + H(+). It catalyses the reaction L-threonyl-[protein] + ATP = O-phospho-L-threonyl-[protein] + ADP + H(+). Its function is as follows. Serine/threonine-protein kinase involved in the regulation of auxin signaling. Plays a minor role in the regulation of cellular auxin efflux and cotyledon organogenesis. The polypeptide is Protein kinase PINOID 2 (PID2) (Arabidopsis thaliana (Mouse-ear cress)).